The primary structure comprises 243 residues: Carboxy-S-adenosyl-L-methionine synthase (243 aa).

Residues Y40, 65-67 (GCS), 90-91 (DN), 118-119 (DI), N133, and R200 each bind S-adenosyl-L-methionine.

It belongs to the class I-like SAM-binding methyltransferase superfamily. Cx-SAM synthase family. As to quaternary structure, homodimer.

The enzyme catalyses prephenate + S-adenosyl-L-methionine = carboxy-S-adenosyl-L-methionine + 3-phenylpyruvate + H2O. In terms of biological role, catalyzes the conversion of S-adenosyl-L-methionine (SAM) to carboxy-S-adenosyl-L-methionine (Cx-SAM). This chain is Carboxy-S-adenosyl-L-methionine synthase, found in Shewanella sp. (strain MR-7).